Consider the following 217-residue polypeptide: MGQKINPIGLRVGVIRDWEAKWYAEKDFASLLHEDLKIRKFIDNELKEASVSHVDIERAANRINIAIHTGKPGMVIGKGGSEIEKLRNKLNTLTDKKVHINVIEIKKIDIDARLVAENIARQLENRASFRRVQKQAITRAMKNGAKGIKTQVSGRLGGADIARAEQYSEGTVPLHTLRADIDYAHAEADTTYGKLGVKVWIYRGEVLPTKNTSEGGK.

The 69-residue stretch at 38–106 folds into the KH type-2 domain; sequence IRKFIDNELK…KVHINVIEIK (69 aa).

The protein belongs to the universal ribosomal protein uS3 family. As to quaternary structure, part of the 30S ribosomal subunit. Forms a tight complex with proteins S10 and S14.

Functionally, binds the lower part of the 30S subunit head. Binds mRNA in the 70S ribosome, positioning it for translation. The chain is Small ribosomal subunit protein uS3 from Staphylococcus epidermidis (strain ATCC 35984 / DSM 28319 / BCRC 17069 / CCUG 31568 / BM 3577 / RP62A).